Consider the following 433-residue polypeptide: 26S proteasome regulatory subunit 7 (433 aa).

Residues 1–22 (MPDYLGADQRKTKEDEKDDKPI) form a disordered region. Basic and acidic residues predominate over residues 8 to 22 (DQRKTKEDEKDDKPI). At K116 the chain carries N6-acetyllysine. 216 to 223 (GPPGTGKT) is a binding site for ATP. N6-acetyllysine is present on K422.

The protein belongs to the AAA ATPase family. Component of the 19S proteasome regulatory particle complex. The 26S proteasome consists of a 20S core particle (CP) and two 19S regulatory subunits (RP). The regulatory particle is made of a lid composed of 9 subunits, a base containing 6 ATPases including PSMC2 and few additional components. Interacts with NDC80/HEC; this interaction is detected only during M phase. Interacts and SQSTM1. Interacts with PAAF1. Directly interacts with TRIM5. Monoubiquitinated by RNF181. In terms of processing, phosphorylated. Dephosphorylated by UBLCP1 which impairs PSMC2 ATPase activity and disrupts 26S proteasome assembly.

The protein resides in the cytoplasm. The protein localises to the nucleus. Component of the 26S proteasome, a multiprotein complex involved in the ATP-dependent degradation of ubiquitinated proteins. This complex plays a key role in the maintenance of protein homeostasis by removing misfolded or damaged proteins, which could impair cellular functions, and by removing proteins whose functions are no longer required. Therefore, the proteasome participates in numerous cellular processes, including cell cycle progression, apoptosis, or DNA damage repair. PSMC2 belongs to the heterohexameric ring of AAA (ATPases associated with diverse cellular activities) proteins that unfolds ubiquitinated target proteins that are concurrently translocated into a proteolytic chamber and degraded into peptides. In Bos taurus (Bovine), this protein is 26S proteasome regulatory subunit 7 (PSMC2).